Consider the following 628-residue polypeptide: Isoleucine--tRNA ligase (628 aa).

The short motif at 505–509 (KMSKR) is the 'KMSKS' region element. Residue lysine 508 participates in ATP binding.

This sequence belongs to the class-I aminoacyl-tRNA synthetase family.

It catalyses the reaction tRNA(Ile) + L-isoleucine + ATP = L-isoleucyl-tRNA(Ile) + AMP + diphosphate. This Antonospora locustae (Microsporidian parasite) protein is Isoleucine--tRNA ligase.